The following is a 215-amino-acid chain: Ribosomal RNA small subunit methyltransferase G (215 aa).

S-adenosyl-L-methionine contacts are provided by residues glycine 78, leucine 83, 128–129, and arginine 146; that span reads AE.

It belongs to the methyltransferase superfamily. RNA methyltransferase RsmG family.

It localises to the cytoplasm. The catalysed reaction is guanosine(527) in 16S rRNA + S-adenosyl-L-methionine = N(7)-methylguanosine(527) in 16S rRNA + S-adenosyl-L-homocysteine. Specifically methylates the N7 position of guanine in position 527 of 16S rRNA. This is Ribosomal RNA small subunit methyltransferase G from Anaeromyxobacter dehalogenans (strain 2CP-C).